A 344-amino-acid chain; its full sequence is Heat-inducible transcription repressor HrcA (344 aa).

Belongs to the HrcA family.

Its function is as follows. Negative regulator of class I heat shock genes (grpE-dnaK-dnaJ and groELS operons). Prevents heat-shock induction of these operons. In Geobacillus sp. (strain WCH70), this protein is Heat-inducible transcription repressor HrcA.